The primary structure comprises 1125 residues: MAHARHLFLFMVAFTITMVIARLDFNPTIINEDRGRTKIHVGLLAEWTTADGDQGTLGFPALGALPLAISLANQDSNILNGFDVQFEWVDTHCDINIGMHAVSDWWKRGFVGVIGPGCGCTYEGRLASALNIPMIDYVCDENPVSDKSIYPTFLRTIPPSIQVVEAIILTLQRYELDQVSVVVENITKYRNIFNTMKDKFDERDYEILHEEYYAGFDPWDYEMDDPFSEIIQRTKETTRIYVFFGDASDLRQFAMTALDEGILDSGDYVILGAVVDLEVRDSQDYHSLDYILDTSEYLNQINPDYARLFKNREYTRSDNDRALEALKSVIIVTGAPVLKTRNWDRFSTFVIDNALDAPFNGELELRAEIDFASVYMFDATMQLLEALDRTHAAGGDIYDGEEVVSTLLNSTYRSKTDTFYQFDENGDGVKPYVLLHLIPIPKGDGGATKDSLGMYPIGTFNRENGQWGFEEALDEDANVLKPVWHNRDEPPLDMPPCGFHGELCTNWALYLGASIPTFLIIFGGLIGFFIYRKRAYEAALDSLVWKVDWSEVQTKATDTNSQGFSMKNMVMSAISVISNAEKQQIFATIGTYRGTVCALHAVHKNHIDLTRAVRTELKIMRDMRHDNICPFIGACIDRPHISILMHYCAKGSLQDILENDDIKLDSMFLSSLIADLVKGIVYLHSSEIKSHGHLKSSNCVVDNRWVLQITDYGLNEFKKGQKQDVDLGDHAKLARQLWTSPEHLRQEGSMPTAGSPQGDIYSFAIILTELYSRQEPFHENEMDLADIIGRVKSGEVPPYRPILNAVNAAAPDCVLSAIRACWPEDPADRPNIMAVRTMLAPLQKGLKPNILDNMIAIMERYTNNLEELVDERTQELQKEKTKTEQLLHRMLPPSIASQLIKGIAVLPETFEMVSIFFSDIVGFTALSAASTPIQVVNLLNDLYTLFDAIISNYDVYKVETIGDAYMLVSGLPLRNGDRHAGQIASTAHHLLESVKGFIVPHKPEVFLKLRIGIHSGSCVAGVVGLTMPRYCLFGDTVNTASRMESNGLALRIHVSPWCKQVLDKLGGYELEDRGLVPMNGKGEIHTFWLLGQDPSYKITKVKPPPQKLTQEAIEIAANRVIPDDV.

The N-terminal stretch at 1–21 (MAHARHLFLFMVAFTITMVIA) is a signal peptide. The Extracellular segment spans residues 22–510 (RLDFNPTIIN…GELCTNWALY (489 aa)). N-linked (GlcNAc...) asparagine glycosylation is found at N185 and N409. The helical transmembrane segment at 511-531 (LGASIPTFLIIFGGLIGFFIY) threads the bilayer. Residues 532 to 1125 (RKRAYEAALD…AANRVIPDDV (594 aa)) lie on the Cytoplasmic side of the membrane. The Protein kinase domain occupies 571–839 (MSAISVISNA…PNIMAVRTML (269 aa)). A Guanylate cyclase domain is found at 914 to 1044 (SIFFSDIVGF…DTVNTASRME (131 aa)).

Belongs to the adenylyl cyclase class-4/guanylyl cyclase family.

The protein resides in the membrane. The enzyme catalyses GTP = 3',5'-cyclic GMP + diphosphate. Implicated as a cell-surface receptor on spermatozoa for 'speract' a chemotactic peptide, and on various other cells as a receptor for atrial natriuretic peptide. The protein is Speract receptor of Strongylocentrotus purpuratus (Purple sea urchin).